We begin with the raw amino-acid sequence, 102 residues long: Putative septation protein SpoVG 2 (102 aa).

This sequence belongs to the SpoVG family.

Functionally, could be involved in septation. This chain is Putative septation protein SpoVG 2, found in Listeria innocua serovar 6a (strain ATCC BAA-680 / CLIP 11262).